The sequence spans 444 residues: Exodeoxyribonuclease 7 large subunit (444 aa).

This sequence belongs to the XseA family. Heterooligomer composed of large and small subunits.

It is found in the cytoplasm. The catalysed reaction is Exonucleolytic cleavage in either 5'- to 3'- or 3'- to 5'-direction to yield nucleoside 5'-phosphates.. In terms of biological role, bidirectionally degrades single-stranded DNA into large acid-insoluble oligonucleotides, which are then degraded further into small acid-soluble oligonucleotides. This is Exodeoxyribonuclease 7 large subunit from Rickettsia canadensis (strain McKiel).